The primary structure comprises 366 residues: Probable glucuronokinase 2 (366 aa).

Residue 126-136 participates in ATP binding; sequence PRQTGLSGSSA. Asp-179 acts as the Proton acceptor in catalysis.

This sequence belongs to the GHMP kinase family. The cofactor is Mg(2+). Requires Mn(2+) as cofactor. Co(2+) serves as cofactor.

The catalysed reaction is D-glucuronate + ATP = 1-phospho-alpha-D-glucuronate + ADP + H(+). Functionally, sugar-1-kinase with a strict substrate specificity for D-glucuronic acid and ATP. Involved in the biosynthesis of UDP-glucuronic acid (UDP-GlcA), providing nucleotide sugars for cell-wall polymers. May be also involved in a salvage pathway for glucuronic acid. This is Probable glucuronokinase 2 (GLCAK2) from Arabidopsis thaliana (Mouse-ear cress).